A 668-amino-acid chain; its full sequence is MSTTVPPEIEEHTRTLRALLHRWGYAYYVLDAPEVSDAIYDQHYRELVDLESRYPELVSPDSPTRRVGERPASAFVSVTHRVPMFSLENAFSQAELEKWGERLLRAIGPGLEFICELKIDGSATALSYEDGVLVRGATRGDGVEGEEITQNLRTIRAIPLKLLGGEVPAVLEVRGEAFIPRDEFERINQERQAAGEKLFANPRNACAGTLRQLDSRVVASRRLGFFAYTAHYGRAESQWEALAELESHGFRVNPHRSLCRDLAEVRTFCEHWENHRHELPYDTDGVVVKVNAFDHQREVGFTSKFPRWAIAFKYPAEEKSTVVEAIAVQVGRTGALTPVAELQPVAVAGTTVSRATLHNQDRIESLDVRVGDTVIIRKAGEIIPEVVRVIGELRPPEAVPYVFPQTCPECGTAVVRAPGEAAVRCPNPRCPALIRGKLGHWCAALEIDGIGDKLIARLVSLGLVHTVADLYELSAEQLAGLERLGARSAAKIVEQLDRSHRQPWSRVLYGLGLRHIGASVSVELARAFASADALARADLAAIASLYGFGEELARSVVEWFAQAENRALLERLKAHGLQLAGGGRAAQSSALAGLTFVITGTLPTLSREECTALIESHGGKVTSSVSSRTSYVVAGEKAGSKLARAQDLKVAVLDEEQLRALIETREMP.

NAD(+) is bound by residues 37–41, 86–87, and Glu-116; these read DAIYD and SL. The N6-AMP-lysine intermediate role is filled by Lys-118. Arg-139, Glu-176, Lys-289, and Lys-313 together coordinate NAD(+). Zn(2+) contacts are provided by Cys-407, Cys-410, Cys-425, and Cys-430. Residues 586–668 enclose the BRCT domain; it reads AQSSALAGLT…RALIETREMP (83 aa).

Belongs to the NAD-dependent DNA ligase family. LigA subfamily. Mg(2+) serves as cofactor. It depends on Mn(2+) as a cofactor.

The catalysed reaction is NAD(+) + (deoxyribonucleotide)n-3'-hydroxyl + 5'-phospho-(deoxyribonucleotide)m = (deoxyribonucleotide)n+m + AMP + beta-nicotinamide D-nucleotide.. In terms of biological role, DNA ligase that catalyzes the formation of phosphodiester linkages between 5'-phosphoryl and 3'-hydroxyl groups in double-stranded DNA using NAD as a coenzyme and as the energy source for the reaction. It is essential for DNA replication and repair of damaged DNA. This chain is DNA ligase, found in Gloeobacter violaceus (strain ATCC 29082 / PCC 7421).